A 300-amino-acid polypeptide reads, in one-letter code: tRNA pseudouridine synthase B (300 aa).

Aspartate 44 serves as the catalytic Nucleophile.

It belongs to the pseudouridine synthase TruB family. Type 1 subfamily.

The enzyme catalyses uridine(55) in tRNA = pseudouridine(55) in tRNA. Its function is as follows. Responsible for synthesis of pseudouridine from uracil-55 in the psi GC loop of transfer RNAs. This Corynebacterium diphtheriae (strain ATCC 700971 / NCTC 13129 / Biotype gravis) protein is tRNA pseudouridine synthase B.